A 343-amino-acid polypeptide reads, in one-letter code: MRN complex-interacting protein (343 aa).

Residues Glu75–Glu104 are disordered. Over residues Gly87–Glu104 the composition is skewed to polar residues. A phosphoserine mark is found at Ser100 and Ser115. Disordered stretches follow at residues Ser128–Gln178, Ser193–Gly212, and Ala230–Pro324. Residues Arg148–Lys151 carry the Nuclear localization signal (NLS) motif. The segment covering Ser193–Asp202 has biased composition (polar residues). The segment at Lys213 to Arg237 is necessary for the association with the MRN complex. Over residues Ser240–Arg255 the composition is skewed to basic and acidic residues.

It belongs to the MRNIP family. In terms of assembly, associates with the MRE11-RAD50-NBN (MRN) damage-sensing complex; this association is constitutive. Interacts with MRE11. Interacts with NBN. Interacts with RAD50. Post-translationally, phosphorylated; phosphorylation is constitutive and occurs in the absence of any DNA-damaging stimulus. Phosphorylation on Ser-115 is necessary for its nuclear retention.

It is found in the nucleus. It localises to the nucleoplasm. Functionally, plays a role in the cellular response to DNA damage and the maintenance of genome stability through its association with the MRN damage-sensing complex. Promotes chromatin loading and activity of the MRN complex to facilitate subsequent ATM-mediated DNA damage response signaling and DNA repair. This chain is MRN complex-interacting protein, found in Homo sapiens (Human).